A 622-amino-acid chain; its full sequence is Arginine--tRNA ligase (622 aa).

Positions 127-137 (ANPVHPLHVGH) match the 'HIGH' region motif.

It belongs to the class-I aminoacyl-tRNA synthetase family.

Its subcellular location is the cytoplasm. The enzyme catalyses tRNA(Arg) + L-arginine + ATP = L-arginyl-tRNA(Arg) + AMP + diphosphate. This Ignicoccus hospitalis (strain KIN4/I / DSM 18386 / JCM 14125) protein is Arginine--tRNA ligase.